A 105-amino-acid chain; its full sequence is Thioredoxin (105 aa).

The Thioredoxin domain maps to 2-105; it reads VKQIESKYAF…KLEATINELI (104 aa). Lys3 bears the N6-acetyllysine mark. Lys8 carries the N6-succinyllysine modification. Residues Cys32 and Cys35 each act as nucleophile in the active site. A disulfide bridge connects residues Cys32 and Cys35. Lys39 carries the post-translational modification N6-acetyllysine. Residues Cys62 and Cys69 each carry the S-nitrosocysteine modification. S-nitrosocysteine; alternate is present on Cys73. Lys94 carries the N6-acetyllysine; alternate modification. Lys94 carries the N6-succinyllysine; alternate modification.

This sequence belongs to the thioredoxin family. As to quaternary structure, homodimer; disulfide-linked. Interacts with TXNIP through the redox-active site. Interacts with MAP3K5 and CASP3. Interacts with APEX1; the interaction stimulates the FOS/JUN AP-1 DNA-binding activity in a redox-dependent manner. In the fully reduced protein, both Cys-69 and Cys-73 are nitrosylated in response to nitric oxide (NO). When two disulfide bonds are present in the protein, only Cys-73 is nitrosylated. Cys-73 can serve as donor for nitrosylation of target proteins.

The protein resides in the nucleus. It localises to the cytoplasm. The protein localises to the secreted. Functionally, participates in various redox reactions through the reversible oxidation of its active center dithiol to a disulfide and catalyzes dithiol-disulfide exchange reactions. Plays a role in the reversible S-nitrosylation of cysteine residues in target proteins, and thereby contributes to the response to intracellular nitric oxide. Nitrosylates the active site Cys of CASP3 in response to nitric oxide (NO), and thereby inhibits caspase-3 activity. Induces the FOS/JUN AP-1 DNA binding activity in ionizing radiation (IR) cells through its oxidation/reduction status and stimulates AP-1 transcriptional activity. The polypeptide is Thioredoxin (TXN) (Ovis aries (Sheep)).